A 407-amino-acid chain; its full sequence is Acetate kinase (407 aa).

A Mg(2+)-binding site is contributed by N10. Residue K17 participates in ATP binding. R93 is a binding site for substrate. Residue D150 is the Proton donor/acceptor of the active site. ATP contacts are provided by residues 210–214, 284–286, and 332–336; these read HLGNG, DMR, and GVGEN. E386 lines the Mg(2+) pocket.

Belongs to the acetokinase family. As to quaternary structure, homodimer. It depends on Mg(2+) as a cofactor. Mn(2+) serves as cofactor.

Its subcellular location is the cytoplasm. The enzyme catalyses acetate + ATP = acetyl phosphate + ADP. It participates in metabolic intermediate biosynthesis; acetyl-CoA biosynthesis; acetyl-CoA from acetate: step 1/2. Catalyzes the formation of acetyl phosphate from acetate and ATP. Can also catalyze the reverse reaction. The chain is Acetate kinase from Streptomyces coelicolor (strain ATCC BAA-471 / A3(2) / M145).